The primary structure comprises 282 residues: Succinate dehydrogenase [ubiquinone] iron-sulfur subunit, mitochondrial (282 aa).

The transit peptide at 1 to 30 (MAATVGVSLKRGFPAAVLGRVGLQFQACRG) directs the protein to the mitochondrion. The region spanning 42 to 135 (KKFAIYRWDP…VSKIYPLPHM (94 aa)) is the 2Fe-2S ferredoxin-type domain. Residues lysine 53 and lysine 57 each carry the N6-acetyllysine modification. The [2Fe-2S] cluster site is built by cysteine 95, cysteine 100, cysteine 103, and cysteine 115. The interval 148–220 (FYAQYKSIEP…PAVLMQAYRW (73 aa)) is interaction with SDHAF1. Residues 178 to 208 (DREKLDGLYECILCACCSTSCPSYWWNGDKY) enclose the 4Fe-4S ferredoxin-type domain. [4Fe-4S] cluster-binding residues include cysteine 188, cysteine 191, and cysteine 194. Cysteine 198 is a [3Fe-4S] cluster binding site. Tryptophan 203 contacts a ubiquinone. 2 residues coordinate [3Fe-4S] cluster: cysteine 245 and cysteine 251. Cysteine 255 contributes to the [4Fe-4S] cluster binding site.

Belongs to the succinate dehydrogenase/fumarate reductase iron-sulfur protein family. Component of complex II composed of four subunits: the flavoprotein (FP) SDHA, iron-sulfur protein (IP) SDHB, and a cytochrome b560 composed of SDHC and SDHD. Interacts with SDHAF1; the interaction is required for iron-sulfur cluster incorporation into SDHB. [2Fe-2S] cluster is required as a cofactor. The cofactor is [3Fe-4S] cluster. [4Fe-4S] cluster serves as cofactor.

Its subcellular location is the mitochondrion inner membrane. The enzyme catalyses a quinone + succinate = fumarate + a quinol. It catalyses the reaction (R)-malate + a quinone = enol-oxaloacetate + a quinol. The catalysed reaction is (S)-malate + a quinone = enol-oxaloacetate + a quinol. It participates in carbohydrate metabolism; tricarboxylic acid cycle; fumarate from succinate (eukaryal route): step 1/1. Its activity is regulated as follows. Enol-oxaloacetate inhibits the succinate dehydrogenase activity. Iron-sulfur protein (IP) subunit of the succinate dehydrogenase complex (mitochondrial respiratory chain complex II), responsible for transferring electrons from succinate to ubiquinone (coenzyme Q). SDH also oxidizes malate to the non-canonical enol form of oxaloacetate, enol-oxaloacetate. Enol-oxaloacetate, which is a potent inhibitor of the succinate dehydrogenase activity, is further isomerized into keto-oxaloacetate. The polypeptide is Succinate dehydrogenase [ubiquinone] iron-sulfur subunit, mitochondrial (Sdhb) (Mus musculus (Mouse)).